Reading from the N-terminus, the 643-residue chain is Type VI secretion system spike protein VgrG1a (643 aa).

The protein belongs to the VgrG protein family. Forms homotrimers. Part of the type VI secretion system (T6SS). Interacts with EagT6 and Tse6; these interactions are required for Tse6 loading onto VgrG1. Interacts with Hcp1.

It is found in the secreted. In terms of biological role, part of the H1 type VI secretion system (H1-T6SS) specialized secretion system, which delivers several virulence factors in both prokaryotic and eukaryotic cells during infection. Forms the spike at the tip of the elongating tube formed by haemolysin co-regulated protein 1/Hcp1. Allows the delivery of the Tse6 toxin to target cells where it exerts its toxicity. This Pseudomonas aeruginosa (strain ATCC 15692 / DSM 22644 / CIP 104116 / JCM 14847 / LMG 12228 / 1C / PRS 101 / PAO1) protein is Type VI secretion system spike protein VgrG1a.